Here is a 906-residue protein sequence, read N- to C-terminus: Putative disease resistance protein At1g59780 (906 aa).

A coiled-coil region spans residues 20–59 (KLLSQEYERFQGVEEQITELRDDLKMLMAFLSDADAKKQT). An NB-ARC domain is found at 138–452 (SHAQLERKRE…AEGITYPGNY (315 aa)). ATP is bound at residue 187–194 (GLGGLGKT). LRR repeat units lie at residues 572-597 (LPLLRVLDLDGAKFKGGKLPSSIGKL), 599-619 (HLKYLSLYQASVTYLPSSLRN), 620-644 (LKSLLYLNLRINSGQLINVPNVFKE), and 825-850 (MPLLHTLHIVDCKKLKEIPDGLRFIS).

The protein belongs to the disease resistance NB-LRR family.

Functionally, potential disease resistance protein. The protein is Putative disease resistance protein At1g59780 of Arabidopsis thaliana (Mouse-ear cress).